A 161-amino-acid chain; its full sequence is MTNLCPCGTGKSFGECCEPLVTGARAALTAEELMRSRYTAYTRAEIGYIHDTTHPDHRADFDEKGTREWAESSQWEGLEILATAGGGPADTEGRVEFIARYRDTGGRRTHHELAEFRKVDDAWYFTDGYGIKPQPAVSTKIGRNDPCTCGSGKKYKKCCGA.

It belongs to the UPF0225 family.

This is UPF0225 protein GSU1048 from Geobacter sulfurreducens (strain ATCC 51573 / DSM 12127 / PCA).